The following is a 304-amino-acid chain: MKHYGEYKNLFSKLYEESQIQLDAKMSEHIYFKVGGPVDILLTPNSIQQVKETITICKENNIPFYVIGNGSNILVKDGGIRGVVIKLCELNKIECIGNKIIAECGALLKDVSKAATEGSLAGFQFACGIPGSVGGAVFMNAGAYDGEISFVIESAEVLDDNQEIRIIPKSELNLGYRQSVVMQKGYIVLRATFNLVNGDKEKIQARVDELTKRREERQPLEYPSAGSTFKRPEGYFAGKLIEDAGLKGFAIGGACVSEKHAGFVINCKNGTAKDVLDVIYHVRDEVKKQFGVDLYPEVRIWGED.

The 166-residue stretch at 33–198 folds into the FAD-binding PCMH-type domain; sequence KVGGPVDILL…LRATFNLVNG (166 aa). Arg177 is an active-site residue. The active-site Proton donor is Ser227. Residue Glu297 is part of the active site.

Belongs to the MurB family. Requires FAD as cofactor.

The protein localises to the cytoplasm. The catalysed reaction is UDP-N-acetyl-alpha-D-muramate + NADP(+) = UDP-N-acetyl-3-O-(1-carboxyvinyl)-alpha-D-glucosamine + NADPH + H(+). It participates in cell wall biogenesis; peptidoglycan biosynthesis. Functionally, cell wall formation. The sequence is that of UDP-N-acetylenolpyruvoylglucosamine reductase from Clostridium beijerinckii (strain ATCC 51743 / NCIMB 8052) (Clostridium acetobutylicum).